We begin with the raw amino-acid sequence, 209 residues long: Large ribosomal subunit protein uL3 (209 aa).

Gln150 carries the N5-methylglutamine modification.

This sequence belongs to the universal ribosomal protein uL3 family. In terms of assembly, part of the 50S ribosomal subunit. Forms a cluster with proteins L14 and L19. Methylated by PrmB.

One of the primary rRNA binding proteins, it binds directly near the 3'-end of the 23S rRNA, where it nucleates assembly of the 50S subunit. This chain is Large ribosomal subunit protein uL3, found in Salmonella paratyphi C (strain RKS4594).